Reading from the N-terminus, the 361-residue chain is Holliday junction branch migration complex subunit RuvB (361 aa).

The span at 1–12 (MNWDETGPETDE) shows a compositional bias: acidic residues. Residues 1–21 (MNWDETGPETDEPTGPVLDDR) are disordered. The tract at residues 13-199 (PTGPVLDDRL…FGFTGHMEFY (187 aa)) is large ATPase domain (RuvB-L). ATP is bound by residues L38, R39, G80, K83, T84, T85, 146–148 (EDF), R189, Y199, and R236. T84 contacts Mg(2+). The tract at residues 200–270 (APAELERVLH…IAMAALKVYE (71 aa)) is small ATPAse domain (RuvB-S). Positions 273–361 (ARGLDRLDRA…AKGQQGLFGA (89 aa)) are head domain (RuvB-H). Residues R309, R328, and R333 each coordinate DNA.

This sequence belongs to the RuvB family. Homohexamer. Forms an RuvA(8)-RuvB(12)-Holliday junction (HJ) complex. HJ DNA is sandwiched between 2 RuvA tetramers; dsDNA enters through RuvA and exits via RuvB. An RuvB hexamer assembles on each DNA strand where it exits the tetramer. Each RuvB hexamer is contacted by two RuvA subunits (via domain III) on 2 adjacent RuvB subunits; this complex drives branch migration. In the full resolvosome a probable DNA-RuvA(4)-RuvB(12)-RuvC(2) complex forms which resolves the HJ.

It is found in the cytoplasm. The catalysed reaction is ATP + H2O = ADP + phosphate + H(+). Functionally, the RuvA-RuvB-RuvC complex processes Holliday junction (HJ) DNA during genetic recombination and DNA repair, while the RuvA-RuvB complex plays an important role in the rescue of blocked DNA replication forks via replication fork reversal (RFR). RuvA specifically binds to HJ cruciform DNA, conferring on it an open structure. The RuvB hexamer acts as an ATP-dependent pump, pulling dsDNA into and through the RuvAB complex. RuvB forms 2 homohexamers on either side of HJ DNA bound by 1 or 2 RuvA tetramers; 4 subunits per hexamer contact DNA at a time. Coordinated motions by a converter formed by DNA-disengaged RuvB subunits stimulates ATP hydrolysis and nucleotide exchange. Immobilization of the converter enables RuvB to convert the ATP-contained energy into a lever motion, pulling 2 nucleotides of DNA out of the RuvA tetramer per ATP hydrolyzed, thus driving DNA branch migration. The RuvB motors rotate together with the DNA substrate, which together with the progressing nucleotide cycle form the mechanistic basis for DNA recombination by continuous HJ branch migration. Branch migration allows RuvC to scan DNA until it finds its consensus sequence, where it cleaves and resolves cruciform DNA. This chain is Holliday junction branch migration complex subunit RuvB, found in Streptomyces griseus subsp. griseus (strain JCM 4626 / CBS 651.72 / NBRC 13350 / KCC S-0626 / ISP 5235).